The primary structure comprises 250 residues: Small ribosomal subunit protein uS3 (250 aa).

One can recognise a KH type-2 domain in the interval 39-111; sequence IRTLIKNHYP…KVQINIFEVK (73 aa).

This sequence belongs to the universal ribosomal protein uS3 family. In terms of assembly, part of the 30S ribosomal subunit. Forms a tight complex with proteins S10 and S14.

Binds the lower part of the 30S subunit head. Binds mRNA in the 70S ribosome, positioning it for translation. The polypeptide is Small ribosomal subunit protein uS3 (Rubus stunt phytoplasma).